A 574-amino-acid chain; its full sequence is UvrABC system protein C (574 aa).

One can recognise a GIY-YIG domain in the interval 12–92 (KKPGVYIFKN…IYIHKPKYNI (81 aa)). The region spanning 200-235 (EEVKNYLQKAMMDYAKIKNYEKAAQMRDTLFKLENL) is the UVR domain.

Belongs to the UvrC family. Interacts with UvrB in an incision complex.

Its subcellular location is the cytoplasm. Functionally, the UvrABC repair system catalyzes the recognition and processing of DNA lesions. UvrC both incises the 5' and 3' sides of the lesion. The N-terminal half is responsible for the 3' incision and the C-terminal half is responsible for the 5' incision. This chain is UvrABC system protein C, found in Petrotoga mobilis (strain DSM 10674 / SJ95).